Reading from the N-terminus, the 331-residue chain is Probable allantoicase (331 aa).

Belongs to the allantoicase family.

The catalysed reaction is allantoate + H2O = (S)-ureidoglycolate + urea. It participates in nitrogen metabolism; (S)-allantoin degradation; (S)-ureidoglycolate from allantoate (aminidohydrolase route): step 1/1. This Pseudomonas syringae pv. tomato (strain ATCC BAA-871 / DC3000) protein is Probable allantoicase.